The chain runs to 274 residues: Putative septum site-determining protein MinD (274 aa).

22 to 29 provides a ligand contact to ATP; sequence KGGVGKTT.

The protein belongs to the ParA family. MinD subfamily.

The protein resides in the plastid. It localises to the chloroplast. ATPase required for the correct placement of the division site. The sequence is that of Putative septum site-determining protein MinD (minD-A) from Nephroselmis olivacea (Green alga).